Reading from the N-terminus, the 401-residue chain is Large ribosomal subunit protein uL3 (401 aa).

The segment at 1–21 is disordered; sequence MSHRKFSAPRHGHMGFTPKKR.

The protein belongs to the universal ribosomal protein uL3 family.

The protein resides in the cytoplasm. Its function is as follows. The L3 protein is a component of the large subunit of cytoplasmic ribosomes. This is Large ribosomal subunit protein uL3 (rpl-3) from Caenorhabditis briggsae.